Consider the following 324-residue polypeptide: MAIKKPYRVLLYYMYTTIENPEEFAAEHLQFCNSLELKGRILVAKEGINGTASGTTEQTEKYMEAMKNDPRFAGIVFKVDEADGHAFKKMHVRPRSELVTLRLEDDINPKELTGKYLEPKEFYEAMQQEETIVIDARNDYEYDLGHFRGAIKPEIKSFRELPNWIKENKEVLEGKKILTYCTGGIRCEKFSGWLVREGFEDVSQLHGGIVTYGKDPEVQGELWDGQCYVFDERIAVPVNQKEHVIVGRDHFTNEPCERYVNCANPECNKQILCSEENEAKYLRACSHECRVHPRNRYVKEHELTEEQVAAALEKIEAENQVKLG.

Positions 127 to 221 constitute a Rhodanese domain; that stretch reads QQEETIVIDA…YGKDPEVQGE (95 aa). C181 (cysteine persulfide intermediate) is an active-site residue.

It belongs to the TrhO family.

The catalysed reaction is uridine(34) in tRNA + AH2 + O2 = 5-hydroxyuridine(34) in tRNA + A + H2O. Its function is as follows. Catalyzes oxygen-dependent 5-hydroxyuridine (ho5U) modification at position 34 in tRNAs. The polypeptide is tRNA uridine(34) hydroxylase (Bacillus cytotoxicus (strain DSM 22905 / CIP 110041 / 391-98 / NVH 391-98)).